A 1122-amino-acid polypeptide reads, in one-letter code: Histone deacetylase 5 (1122 aa).

A disordered region spans residues 1 to 22; sequence MNSPNESDGMSGREPSLEILPR. Lysine 35 is covalently cross-linked (Glycyl lysine isopeptide (Lys-Gly) (interchain with G-Cter in SUMO2)). Positions 196-281 are disordered; sequence KEPTPGGLNH…KVAERRSSPL (86 aa). Positions 247–258 are enriched in basic and acidic residues; sequence DSRDDFPLRKTA. Serine 259 carries the post-translational modification Phosphoserine; by AMPK, CaMK1, SIK1 and PKD/PRKD1. A compositionally biased stretch (basic and acidic residues) spans 272 to 281; that stretch reads KVAERRSSPL. Phosphothreonine; by PKC is present on threonine 292. Disordered stretches follow at residues 302–343 and 481–504; these read GAGP…NIPT and MRTV…LPQS. Residues 312-327 are compositionally biased toward low complexity; it reads NSAPGSGPSSPNSSHS. The segment covering 328–340 has biased composition (polar residues); it reads TIAENGFTGSVPN. Positions 494-504 are enriched in low complexity; the sequence is SRTQSSPLPQS. A Phosphoserine; by AMPK, CaMK1, SIK1 and PKD/PRKD1 modification is found at serine 498. At lysine 533 the chain carries N6-acetyllysine. The disordered stretch occupies residues 536 to 625; the sequence is TKTGELPRQP…GPDLEEPGAG (90 aa). Residues 581-621 are compositionally biased toward acidic residues; it reads STQEDLEEEDEEEDGEEEEDCIQVKDEEGESGAEEGPDLEE. 2 positions are modified to phosphoserine: serine 611 and serine 661. The tract at residues 684-1028 is histone deacetylase; sequence GVVYDTFMLK…VSALLSVELQ (345 aa). Cysteine 696, cysteine 698, histidine 704, and cysteine 781 together coordinate Zn(2+). The active site involves histidine 833. The Nuclear export signal signature appears at 1081–1122; sequence EEAETVSAMALLSVGAEQAQAAAAREHSPRPAEEPMEQEPAL. Residues 1097-1122 are disordered; the sequence is EQAQAAAAREHSPRPAEEPMEQEPAL. Over residues 1104 to 1113 the composition is skewed to basic and acidic residues; it reads AREHSPRPAE. Serine 1108 is modified (phosphoserine).

It belongs to the histone deacetylase family. HD type 2 subfamily. As to quaternary structure, interacts with AHRR, BAHD1, BCOR, HDAC7, HDAC9, CTBP1, MEF2C, NCOR2, NRIP1, PHB2 and a 14-3-3 chaperone protein. Interacts with BCL6, DDIT3/CHOP, GRK5, KDM5B and MYOCD. Interacts with EP300 in the presence of TFAP2C. Interacts with ANKRA2. Interacts with CUL7 (as part of the 3M complex); negatively regulated by ANKRA2. Interacts with ZBTB7B; the interaction allows the recruitment of HDAC4 on CD8 loci for deacetylation and possible inhibition of CD8 genes expression. Interacts with RARA. In terms of processing, phosphorylated by AMPK, CaMK1, SIK1 and PRKD1 at Ser-259 and Ser-498. The phosphorylation is required for the export to the cytoplasm and inhibition. Phosphorylated by the PKC kinases PKN1 and PKN2, impairing nuclear import. Phosphorylated by GRK5, leading to nuclear export of HDAC5 and allowing MEF2-mediated transcription. Post-translationally, ubiquitinated. Polyubiquitination however does not lead to its degradation.

It is found in the nucleus. Its subcellular location is the cytoplasm. It carries out the reaction N(6)-acetyl-L-lysyl-[histone] + H2O = L-lysyl-[histone] + acetate. Responsible for the deacetylation of lysine residues on the N-terminal part of the core histones (H2A, H2B, H3 and H4). Histone deacetylation gives a tag for epigenetic repression and plays an important role in transcriptional regulation, cell cycle progression and developmental events. Histone deacetylases act via the formation of large multiprotein complexes. Involved in muscle maturation by repressing transcription of myocyte enhancer MEF2C. During muscle differentiation, it shuttles into the cytoplasm, allowing the expression of myocyte enhancer factors. Serves as a corepressor of RARA and causes its deacetylation. In association with RARA, plays a role in the repression of microRNA-10a and thereby in the inflammatory response. This Pongo abelii (Sumatran orangutan) protein is Histone deacetylase 5 (HDAC5).